Consider the following 1487-residue polypeptide: Golgin subfamily A member 3 (1487 aa).

Methionine 1 bears the N-acetylmethionine mark. Positions 1–118 are disordered; the sequence is MDGASAKQDG…GTSAEGSVRK (118 aa). Residues serine 18 and serine 60 each carry the phosphoserine modification. A compositionally biased stretch (polar residues) spans 62-74; the sequence is DRSSQVAICQNGQ. The interval 121–141 is interaction with GOPC; it reads LQSLRLSLPMQETQLCSTASS. The golgi-targeting domain stretch occupies residues 172–257; that stretch reads ERSSQPATKM…DYRTEDPSDS (86 aa). 2 disordered regions span residues 221–321 and 365–394; these read PKVG…SSLS and AAQHQDQNQEANGEVRSRRDSICSSVSMES. 3 stretches are compositionally biased toward low complexity: residues 269-288, 312-321, and 365-375; these read SSLKQSRSSTSVVSEVSPSS, SDSSSHSSLS, and AAQHQDQNQEA. Position 270 is a phosphoserine (serine 270). Residues 358-1454 are a coiled coil; sequence KDVLQAAAAQ…TITVHESLSS (1097 aa). A phosphoserine mark is found at serine 381, serine 385, and serine 461. Positions 785 to 796 are enriched in basic and acidic residues; sequence KEELDRGARRLE. The segment at 785–804 is disordered; that stretch reads KEELDRGARRLEEDTEETSG. Residue serine 979 is modified to Phosphoserine. The span at 1372 to 1382 shows a compositional bias: basic and acidic residues; it reads RGAAKKKEPKG. 2 disordered regions span residues 1372 to 1396 and 1458 to 1487; these read RGAAKKKEPKGESNSSSPATPIKIP and VEAAPAEHAHPRGDTKLHNQNSVPRDGLGQ. A Phosphoserine modification is found at serine 1387. The segment covering 1462 to 1474 has biased composition (basic and acidic residues); that stretch reads PAEHAHPRGDTKL. Phosphoserine is present on serine 1479.

In terms of assembly, homodimer. Interacts with GOLGA7. Interacts with GOPC. Post-translationally, cleaved by caspases in apoptotic cells. As to expression, highly expressed in testis. Transcripts can be found in spermatids during spermatogenesis. No expression in Leydig cells, spermatogonia or spermatocytes. Detected at low levels in all tissues.

The protein localises to the cytoplasm. Its subcellular location is the golgi apparatus. The protein resides in the golgi stack membrane. Functionally, plays an important role in spermatogenesis and/or testis development. Probably identical with the serologically detectable male antigen (SDM). Probably involved in maintaining Golgi structure. The chain is Golgin subfamily A member 3 (Golga3) from Mus musculus (Mouse).